We begin with the raw amino-acid sequence, 394 residues long: tRNA-specific adenosine deaminase 1 (394 aa).

Residues Ser-54–Phe-388 form the A to I editase domain. His-78 is a Zn(2+) binding site. The active-site Proton donor is the Glu-80. 1D-myo-inositol hexakisphosphate-binding residues include Arg-84 and Arg-85. Zn(2+) is bound by residues Cys-127 and Cys-191. Positions 194, 197, 320, 357, and 381 each coordinate 1D-myo-inositol hexakisphosphate.

It belongs to the ADAT1 family. The cofactor is 1D-myo-inositol hexakisphosphate. In terms of tissue distribution, widely expressed in early embryos, and later concentrates in the central nervous system.

The enzyme catalyses adenosine(37) in tRNA(Ala) + H2O + H(+) = inosine(37) in tRNA(Ala) + NH4(+). Functionally, specifically deaminates adenosine-37 to inosine in tRNA-Ala. The sequence is that of tRNA-specific adenosine deaminase 1 from Drosophila melanogaster (Fruit fly).